The primary structure comprises 103 residues: Large ribosomal subunit protein bL21 (103 aa).

The protein belongs to the bacterial ribosomal protein bL21 family. In terms of assembly, part of the 50S ribosomal subunit. Contacts protein L20.

Its function is as follows. This protein binds to 23S rRNA in the presence of protein L20. The protein is Large ribosomal subunit protein bL21 of Ralstonia nicotianae (strain ATCC BAA-1114 / GMI1000) (Ralstonia solanacearum).